The sequence spans 879 residues: Bifunctional uridylyltransferase/uridylyl-removing enzyme (879 aa).

The tract at residues 1–340 (MANVQEDKDF…GTQDLQHAEH (340 aa)) is uridylyltransferase. The uridylyl-removing stretch occupies residues 341–700 (ISDDFAVANK…IGDENNYGTT (360 aa)). An HD domain is found at 458–580 (VDEHTFRLVR…VSTPERLDYL (123 aa)). ACT domains are found at residues 701–782 (ELFI…STKR) and 809–879 (TFEL…DLEF).

This sequence belongs to the GlnD family. Mg(2+) serves as cofactor.

The enzyme catalyses [protein-PII]-L-tyrosine + UTP = [protein-PII]-uridylyl-L-tyrosine + diphosphate. It carries out the reaction [protein-PII]-uridylyl-L-tyrosine + H2O = [protein-PII]-L-tyrosine + UMP + H(+). With respect to regulation, uridylyltransferase (UTase) activity is inhibited by glutamine, while glutamine activates uridylyl-removing (UR) activity. Its function is as follows. Modifies, by uridylylation and deuridylylation, the PII regulatory proteins (GlnB and homologs), in response to the nitrogen status of the cell that GlnD senses through the glutamine level. Under low glutamine levels, catalyzes the conversion of the PII proteins and UTP to PII-UMP and PPi, while under higher glutamine levels, GlnD hydrolyzes PII-UMP to PII and UMP (deuridylylation). Thus, controls uridylylation state and activity of the PII proteins, and plays an important role in the regulation of nitrogen assimilation and metabolism. The polypeptide is Bifunctional uridylyltransferase/uridylyl-removing enzyme (Idiomarina loihiensis (strain ATCC BAA-735 / DSM 15497 / L2-TR)).